The chain runs to 263 residues: Hydroxyacylglutathione hydrolase (263 aa).

Zn(2+) is bound by residues H55, H57, D59, H60, H117, D134, and H172.

It belongs to the metallo-beta-lactamase superfamily. Glyoxalase II family. As to quaternary structure, monomer. Zn(2+) serves as cofactor.

It catalyses the reaction an S-(2-hydroxyacyl)glutathione + H2O = a 2-hydroxy carboxylate + glutathione + H(+). Its pathway is secondary metabolite metabolism; methylglyoxal degradation; (R)-lactate from methylglyoxal: step 2/2. Its function is as follows. Thiolesterase that catalyzes the hydrolysis of S-D-lactoyl-glutathione to form glutathione and D-lactic acid. This chain is Hydroxyacylglutathione hydrolase, found in Shewanella baltica (strain OS155 / ATCC BAA-1091).